The following is a 707-amino-acid chain: Caprin-1 (707 aa).

2 stretches are compositionally biased toward low complexity: residues 1–15 and 22–43; these read MPSA…SKSS and GSSG…PATG. A disordered region spans residues 1–48; the sequence is MPSATSHSGSGSKSSGPPPPSGSSGSEAAAGAAAPASQHPATGTGAVQ. The residue at position 2 (Pro-2) is an N-acetylproline. A Phosphoserine modification is found at Ser-10. The stretch at 58-92 forms a coiled coil; that stretch reads VIDKKLRNLEKKKGKLDDYQERMNKGERLNQDQLD. At Ser-113 the chain carries Phosphoserine. Residues 123 to 151 adopt a coiled-coil conformation; it reads KTIKKTARREQLMREEAEQKRLKTVLELQ. Arg-163 is subject to Omega-N-methylarginine. The disordered stretch occupies residues 325–347; it reads LQQQPQAASPSVPEPHSLTPVAQ. Residues 326-335 show a composition bias toward low complexity; it reads QQQPQAASPS. 2 positions are modified to phosphoserine: Ser-333 and Ser-341. The tract at residues 358-379 is G3BP1-binding; it reads QDLMAQMQGPYNFIQDSMLDFE. 3 disordered regions span residues 412-443, 523-558, and 570-620; these read ESRL…YTAS, PVPP…EQTE, and TYHG…RGLM. Over residues 431–443 the composition is skewed to polar residues; it reads PLVSSTSEGYTAS. Low complexity predominate over residues 535–558; the sequence is QQSQYQASYNQSFSSQPHQVEQTE. Over residues 572 to 603 the composition is skewed to polar residues; that stretch reads HGSQDQPHQVPGNHQQPPQQSTGFPRSSQPYY. At Tyr-623 the chain carries Phosphotyrosine. Omega-N-methylarginine occurs at positions 624 and 631. 2 positions are modified to phosphotyrosine: Tyr-634 and Tyr-637. Position 638 is an omega-N-methylarginine (Arg-638). A compositionally biased stretch (polar residues) spans 641–655; the sequence is FSNTPNSGYTQSQFN. A disordered region spans residues 641-707; the sequence is FSNTPNSGYT…MPQMNTQQVN (67 aa). Residues Ser-642 and Ser-647 are each glycosylated (O-linked (GlcNAc) serine). Phosphotyrosine is present on residues Tyr-649, Tyr-660, Tyr-663, and Tyr-668. Low complexity-rich tracts occupy residues 674 to 684 and 695 to 707; these read RGSGQSGPRGA and NRGM…QQVN. Position 696 is an asymmetric dimethylarginine; alternate (Arg-696). Position 696 is an omega-N-methylarginine; alternate (Arg-696).

Belongs to the caprin family. As to quaternary structure, may form homomultimers. Interacts with G3BP1; interaction is direct and promotes stress granule formation. Interacts with G3BP2; interaction is direct and promotes stress granule formation. Interacts with PQBP1. Interacts with DDX3X. Interacts (when phosphorylated by EPHA4) with FMR1; interaction with FMR1 promotes formation of a membraneless compartment. Post-translationally, tyrosine phosphorylation by EPHA4 promotes interaction with FMR1 and liquid-liquid phase separation (LLPS) for the formation of a membraneless compartment that concentrates mRNAs with associated regulatory factors. In terms of processing, O-glycosylated (O-GlcNAcylated), in a cell cycle-dependent manner. O-glycosylation by OGT inhibit ability to undergo liquid-liquid phase separation (LLPS). Expressed in hippocampal and neocortical pyramidal neurons, but not in Purkinje cells.

The protein localises to the cytoplasm. It localises to the cytoplasmic ribonucleoprotein granule. It is found in the cytosol. Its subcellular location is the cell projection. The protein resides in the dendrite. The protein localises to the lamellipodium. With respect to regulation, ability to mediate liquid-liquid phase separation is regulated by ATP: moderate concentrations of ATP enhance phase separation, whereas high concentrations of ATP lead to inhibition of phase separation. Functionally, mRNA-binding protein that acts as a regulator of mRNAs transport, translation and/or stability, and which is involved in neurogenesis, synaptic plasticity in neurons and cell proliferation and migration in multiple cell types. Plays an essential role in cytoplasmic stress granule formation. Acts as an mRNA regulator by mediating formation of some phase-separated membraneless compartment: undergoes liquid-liquid phase separation upon binding to target mRNAs, leading to assemble mRNAs into cytoplasmic ribonucleoprotein granules that concentrate mRNAs with associated regulatory factors. Undergoes liquid-liquid phase separation following phosphorylation and interaction with FMR1, promoting formation of cytoplasmic ribonucleoprotein granules that concentrate mRNAs with factors that inhibit translation and mediate deadenylation of target mRNAs. In these cytoplasmic ribonucleoprotein granules, CAPRIN1 mediates recruitment of CNOT7 deadenylase, leading to mRNA deadenylation and degradation. Binds directly and selectively to MYC and CCND2 mRNAs. In neuronal cells, directly binds to several mRNAs associated with RNA granules, including BDNF, CAMK2A, CREB1, MAP2, NTRK2 mRNAs, as well as to GRIN1 and KPNB1 mRNAs, but not to rRNAs. The protein is Caprin-1 (Caprin1) of Rattus norvegicus (Rat).